Consider the following 252-residue polypeptide: Type III pantothenate kinase (252 aa).

6–13 lines the ATP pocket; sequence DIGNTSTA. 104 to 107 provides a ligand contact to substrate; that stretch reads GADR. Aspartate 106 serves as the catalytic Proton acceptor. Aspartate 128 contributes to the K(+) binding site. Threonine 131 contributes to the ATP binding site. Threonine 183 provides a ligand contact to substrate.

The protein belongs to the type III pantothenate kinase family. In terms of assembly, homodimer. NH4(+) serves as cofactor. Requires K(+) as cofactor.

The protein localises to the cytoplasm. It carries out the reaction (R)-pantothenate + ATP = (R)-4'-phosphopantothenate + ADP + H(+). The protein operates within cofactor biosynthesis; coenzyme A biosynthesis; CoA from (R)-pantothenate: step 1/5. Catalyzes the phosphorylation of pantothenate (Pan), the first step in CoA biosynthesis. The polypeptide is Type III pantothenate kinase (Thermus thermophilus (strain ATCC 27634 / DSM 579 / HB8)).